A 199-amino-acid polypeptide reads, in one-letter code: Octanoyltransferase (199 aa).

The 173-residue stretch at 27-199 (SNSCDELWLL…FVQYFLTQFK (173 aa)) folds into the BPL/LPL catalytic domain. Substrate-binding positions include 66–73 (RGGQVTYH), 133–135 (SIG), and 146–148 (GIA). The active-site Acyl-thioester intermediate is the Cys164.

Belongs to the LipB family.

It localises to the cytoplasm. The enzyme catalyses octanoyl-[ACP] + L-lysyl-[protein] = N(6)-octanoyl-L-lysyl-[protein] + holo-[ACP] + H(+). It participates in protein modification; protein lipoylation via endogenous pathway; protein N(6)-(lipoyl)lysine from octanoyl-[acyl-carrier-protein]: step 1/2. Catalyzes the transfer of endogenously produced octanoic acid from octanoyl-acyl-carrier-protein onto the lipoyl domains of lipoate-dependent enzymes. Lipoyl-ACP can also act as a substrate although octanoyl-ACP is likely to be the physiological substrate. The sequence is that of Octanoyltransferase from Legionella pneumophila (strain Corby).